Here is a 706-residue protein sequence, read N- to C-terminus: DNA ligase (706 aa).

Residues Asp47–Asp51, Ser96–Ile97, and Glu133 each bind NAD(+). The N6-AMP-lysine intermediate role is filled by Lys135. Positions 156, 192, 323, and 347 each coordinate NAD(+). Zn(2+)-binding residues include Cys441, Cys444, Cys459, and Cys465. The BRCT domain occupies Val624–Glu706.

The protein belongs to the NAD-dependent DNA ligase family. LigA subfamily. Mg(2+) serves as cofactor. Mn(2+) is required as a cofactor.

It carries out the reaction NAD(+) + (deoxyribonucleotide)n-3'-hydroxyl + 5'-phospho-(deoxyribonucleotide)m = (deoxyribonucleotide)n+m + AMP + beta-nicotinamide D-nucleotide.. Functionally, DNA ligase that catalyzes the formation of phosphodiester linkages between 5'-phosphoryl and 3'-hydroxyl groups in double-stranded DNA using NAD as a coenzyme and as the energy source for the reaction. It is essential for DNA replication and repair of damaged DNA. This Polaromonas sp. (strain JS666 / ATCC BAA-500) protein is DNA ligase.